Consider the following 275-residue polypeptide: Large ribosomal subunit protein uL2 (275 aa).

Basic and acidic residues predominate over residues 28–38 (EPYAPLLDKKS). Disordered regions lie at residues 28 to 55 (EPYA…RHVG) and 224 to 258 (AMNP…GYKT).

The protein belongs to the universal ribosomal protein uL2 family. Part of the 50S ribosomal subunit. Forms a bridge to the 30S subunit in the 70S ribosome.

Functionally, one of the primary rRNA binding proteins. Required for association of the 30S and 50S subunits to form the 70S ribosome, for tRNA binding and peptide bond formation. It has been suggested to have peptidyltransferase activity; this is somewhat controversial. Makes several contacts with the 16S rRNA in the 70S ribosome. The sequence is that of Large ribosomal subunit protein uL2 from Cellvibrio japonicus (strain Ueda107) (Pseudomonas fluorescens subsp. cellulosa).